The following is a 123-amino-acid chain: Cliotide T4 (123 aa).

The first 28 residues, methionine 1–alanine 28, serve as a signal peptide directing secretion. Residues glycine 29 to asparagine 58 constitute a cross-link (cyclopeptide (Gly-Asn)). 3 disulfide bridges follow: cysteine 32–cysteine 48, cysteine 36–cysteine 50, and cysteine 41–cysteine 55. Residues histidine 59–asparagine 123 constitute a propeptide, removed in mature form.

Post-translationally, contains 3 disulfide bonds. In terms of processing, this is a cyclic peptide. In terms of tissue distribution, expressed in flower, stem, shoot, root, leaf, seed, pod and nodule (at protein level).

Probably participates in a plant defense mechanism. Active against Gram-negative bacteria E.coli ATCC 700926 (MIC=1.0 uM), K.pneumoniae ATTC 13883 (MIC=5.5 uM) and P.aeruginosa ATCC 39018 (MIC=7.5 uM). Has hemolytic and cytotoxic activity. The chain is Cliotide T4 from Clitoria ternatea (Butterfly pea).